A 181-amino-acid chain; its full sequence is Protein TrbB (181 aa).

The N-terminal stretch at 1–22 (MSLTKSLLFTLLLSAAAVQAST) is a signal peptide. Residues 37 to 172 (TQPAQPAAGT…FMARVDTVLQ (136 aa)) form the Thioredoxin domain.

Its subcellular location is the periplasm. This chain is Protein TrbB (trbB), found in Escherichia coli (strain K12).